Consider the following 273-residue polypeptide: Large ribosomal subunit protein uL2 (273 aa).

The tract at residues 221–263 is disordered; that stretch reads RGTAMNPVDHPHGGGEGRNFGKHPVTPWGVQTKGKKTRHNKRT. Positions 253 to 263 are enriched in basic residues; the sequence is KGKKTRHNKRT.

This sequence belongs to the universal ribosomal protein uL2 family. As to quaternary structure, part of the 50S ribosomal subunit. Forms a bridge to the 30S subunit in the 70S ribosome.

Functionally, one of the primary rRNA binding proteins. Required for association of the 30S and 50S subunits to form the 70S ribosome, for tRNA binding and peptide bond formation. It has been suggested to have peptidyltransferase activity; this is somewhat controversial. Makes several contacts with the 16S rRNA in the 70S ribosome. This is Large ribosomal subunit protein uL2 from Actinobacillus succinogenes (strain ATCC 55618 / DSM 22257 / CCUG 43843 / 130Z).